An 892-amino-acid polypeptide reads, in one-letter code: Dipeptidyl peptidase 8 (892 aa).

Residues serine 749, aspartate 827, and histidine 859 each act as charge relay system in the active site.

Belongs to the peptidase S9B family. DPPIV subfamily. In terms of assembly, homodimer. Forms a ternary complex with NLRP1, composed of a DPP8 homodimer, one full-length NLRP1 protein, and one cleaved C-terminus of NLRP1 (NACHT, LRR and PYD domains-containing protein 1, C-terminus). Forms a ternary complex with CARD8, composed of a DPP8 homodimer, one full-length NLRP1 protein, and one cleaved C-terminus of CARD8 (Caspase recruitment domain-containing protein 8, C-terminus). In the ternary complex, only one subunit of the DPP8 homodimer is bound to NLRP1 or CARD8.

The protein localises to the cytoplasm. It carries out the reaction Release of an N-terminal dipeptide, Xaa-Yaa-|-Zaa-, from a polypeptide, preferentially when Yaa is Pro, provided Zaa is neither Pro nor hydroxyproline.. Its activity is regulated as follows. Inhibited by zinc. Inhibited by the serine proteinase inhibitor 4-(2-aminoethyl)benzenesulphonyl fluoride (AEBSF), and by di-isopropylfluorophosphate. Specifically inhibited by isoindoline derivatives. Inhibited by Val-boroPro (Talabostat, PT-100), a non-selective inhibitor, which triggers pyroptosis in monocytes and macrophages. In terms of biological role, dipeptidyl peptidase that cleaves off N-terminal dipeptides from proteins having a Pro or Ala residue at position 2. Acts as a key inhibitor of caspase-1-dependent monocyte and macrophage pyroptosis in resting cells by preventing activation of NLRP1 and CARD8. Sequesters the cleaved C-terminal part of NLRP1 and CARD8, which respectively constitute the active part of the NLRP1 and CARD8 inflammasomes, in a ternary complex, thereby preventing their oligomerization and activation. The dipeptidyl peptidase activity is required to suppress NLRP1 and CARD8; however, neither NLRP1 nor CARD8 are bona fide substrates of DPP8, suggesting the existence of substrate(s) required for NLRP1 and CARD8 inhibition. This is Dipeptidyl peptidase 8 from Mus musculus (Mouse).